The sequence spans 196 residues: Large ribosomal subunit protein uL6 (196 aa).

It belongs to the universal ribosomal protein uL6 family. As to quaternary structure, part of the 50S ribosomal subunit.

In terms of biological role, this protein binds to the 23S rRNA, and is important in its secondary structure. It is located near the subunit interface in the base of the L7/L12 stalk, and near the tRNA binding site of the peptidyltransferase center. The polypeptide is Large ribosomal subunit protein uL6 (Archaeoglobus fulgidus (strain ATCC 49558 / DSM 4304 / JCM 9628 / NBRC 100126 / VC-16)).